A 362-amino-acid chain; its full sequence is Talin rod domain-containing protein 1 (362 aa).

The segment at 1 to 27 is disordered; that stretch reads MASGSAGKPTGEAASPAPGSAVGGASS. An N-acetylalanine modification is found at Ala-2. Residues 9-27 are compositionally biased toward low complexity; sequence PTGEAASPAPGSAVGGASS.

In terms of assembly, may homodimerize. Interacts with F-actin. Ubiquitous.

Actin-binding protein which may have an oncogenic function and regulates cell proliferation, migration and invasion in cancer cells. This is Talin rod domain-containing protein 1 from Mus musculus (Mouse).